The following is a 176-amino-acid chain: Epididymal-specific lipocalin-9 (176 aa).

The signal sequence occupies residues 1–15 (MALLLLSLGLSLIAA). Residues N68 and N129 are each glycosylated (N-linked (GlcNAc...) asparagine). An intrachain disulfide couples C83 to C161.

The protein belongs to the calycin superfamily. Lipocalin family.

It is found in the secreted. The sequence is that of Epididymal-specific lipocalin-9 from Homo sapiens (Human).